Here is a 114-residue protein sequence, read N- to C-terminus: MQFTKMSAFATLALATLAAATPTRRNDSPSNQCNTGSLQCCNSLQSANSASLAGLLGLLGVVVGTITGQVGVTCSPITGVGVSGTSCSEQPVCCTNNAFNGVIALGCSPININL.

The first 20 residues, 1–20 (MQFTKMSAFATLALATLAAA), serve as a signal peptide directing secretion. Intrachain disulfides connect cysteine 33–cysteine 93, cysteine 40–cysteine 87, cysteine 41–cysteine 74, and cysteine 94–cysteine 107.

It belongs to the fungal hydrophobin family. In terms of assembly, self-assembles to form functional amyloid fibrils called rodlets. Self-assembly into fibrillar rodlets occurs spontaneously at hydrophobic:hydrophilic interfaces and the rodlets further associate laterally to form amphipathic monolayers.

Its subcellular location is the secreted. It is found in the cell wall. Its function is as follows. Aerial growth, conidiation, and dispersal of filamentous fungi in the environment rely upon a capability of their secreting small amphipathic proteins called hydrophobins (HPBs) with low sequence identity. Class I can self-assemble into an outermost layer of rodlet bundles on aerial cell surfaces, conferring cellular hydrophobicity that supports fungal growth, development and dispersal; whereas Class II form highly ordered films at water-air interfaces through intermolecular interactions but contribute nothing to the rodlet structure. Pnh1 is a class I hydrophobin that might be involved in the attachment of the hydrophilic wall of hyphae to the hydrophobic surface of wood under inorganic phosphate (Pi)-deficient conditions and enable the mycelium to degrade efficiently the components of wood and to acquire nutrients containing Pi. This chain is Class I hydrophobin 1, found in Pholiota nameko.